We begin with the raw amino-acid sequence, 456 residues long: MEEENEVVKTFAELGVREELVKACERLGWKNPSKIQAEALPFALEGKDVIGLAQTGSGKTGAFAIPILQALLEYVYDSEPKKGRRPDPAFFACVLSPTRELAIQIAEQFEALGADISLRCAVLVGGIDRMQQTIALGKRPHVIVATPGRLWDHMSDTKGFSLKSLKYLVLDEADRLLNEDFEKSLNQILEEIPLERKTFLFSATMTKKVRKLQRACLRNPVKIEAASKYSTVDTLKQQYRFVAAKYKDCYLVYILSEMPESTSMIFTRTCDGTRFLALVLRSLGFRAIPISGQMTQSKRLGALNKFKAGECNILVCTDVASRGLDIPSVDVVINYDIPTNSKDYIHRVGRTARAGRSGVGISLVNQYELEWYIQIEKLIGKKLPEYPAEEDEVLSLLERVAEAKKLSAMNMKESGGRKRRGEDDEESERFLGGNKDRGNKERGGNKDKKSSKKFKR.

The short motif at K9–A37 is the Q motif element. The Helicase ATP-binding domain occupies L40–I223. Position 53–60 (A53–T60) interacts with ATP. The short motif at D171–D174 is the DEAD box element. Residues Y250 to L394 enclose the Helicase C-terminal domain. The disordered stretch occupies residues S407–R456. The span at N434 to K448 shows a compositional bias: basic and acidic residues.

The protein belongs to the DEAD box helicase family. DDX47/RRP3 subfamily. Expressed in all tissues and organs examined including root, cotyledon, first and second leaves, third and fourth leaves, fifth and sixth leaves, shoot apex, flower, flower bud, cauline leaf and rosette leaves.

The protein resides in the nucleus. It is found in the nucleolus. The catalysed reaction is ATP + H2O = ADP + phosphate + H(+). Its function is as follows. Involved in leaf polarity establishment by functioning cooperatively with AS2 to repress abaxial genes ARF3, ARF4, KAN1, KAN2, YAB1 and YAB5, and the knox homeobox genes KNAT1, KNAT2, KNAT6, and STM to promote adaxial development in leaf primordia at shoot apical meristems at high temperatures. Involved in the processing of pre-rRNA intermediates at high temperatures. This Arabidopsis thaliana (Mouse-ear cress) protein is DEAD-box ATP-dependent RNA helicase 10 (RH10).